Consider the following 185-residue polypeptide: Lysine-rich arabinogalactan protein 17 (185 aa).

An N-terminal signal peptide occupies residues 1-21; it reads MTRNILLTVTLICIVFITVGG. The disordered stretch occupies residues 25-160; sequence ATAPIHSPST…FSPAADDQSG (136 aa). Over residues 43 to 68 the composition is skewed to low complexity; sequence SPAISPAAPTPESTEAPAKTPVEAPV. Positions 69–88 are enriched in pro residues; that stretch reads EAPPSPTPASTPQISPPAPS. The span at 111–122 shows a compositional bias: basic residues; that stretch reads TKHKKKTKKHKT. Residues 135 to 146 show a composition bias toward pro residues; the sequence is PPAPPGEAPGPG. Residue Ser159 is the site of GPI-anchor amidated serine attachment. Positions 160–185 are cleaved as a propeptide — removed in mature form; that stretch reads GAQRISVVIQMVGAAAIAWSLLVLAF.

Belongs to the lysine-rich AGP family. O-glycosylated on the hydroxyproline residues. Predominantly expressed in open flowers. Also expressed in leaves and stems, and at a lower level in roots.

Its subcellular location is the cell membrane. In terms of biological role, proteoglycan that seems to be implicated in diverse developmental roles such as differentiation, cell-cell recognition, embryogenesis and programmed cell death. The polypeptide is Lysine-rich arabinogalactan protein 17 (AGP17) (Arabidopsis thaliana (Mouse-ear cress)).